The sequence spans 116 residues: Somatostatin (116 aa).

The first 24 residues, 1–24, serve as a signal peptide directing secretion; the sequence is MLSCRLQCALAALSIVLALGGVTC. Residues 25 to 88 constitute a propeptide that is removed on maturation; that stretch reads APSDPRLRQF…QDEMRLELQR (64 aa). Alanine 43 carries the alanine amide modification. Residues 62 to 99 are disordered; sequence QTENDALEPEDLSQAAEQDEMRLELQRSANSNPAMAPR. The cysteines at positions 105 and 116 are disulfide-linked.

Belongs to the somatostatin family. Post-translationally, C-terminal amidation of the neuronostatin peptide is required for its biological activity, including for the regulation of mean arterial pressure.

The protein resides in the secreted. Functionally, inhibits the secretion of pituitary hormones, including that of growth hormone/somatotropin (GH1), PRL, ACTH, luteinizing hormone (LH) and TSH. Also impairs ghrelin- and GnRH-stimulated secretion of GH1 and LH; the inhibition of ghrelin-stimulated secretion of GH1 can be further increased by neuronostatin. In terms of biological role, may enhance low-glucose-induced glucagon release by pancreatic alpha cells. This effect may be mediated by binding to GPR107 and PKA activation. May regulate cardiac contractile function. May compromise cardiomyocyte viability. In the central nervous system, may impair memory retention and may affect hippocampal excitability. May also have anxiolytic and anorexigenic effects. May play a role in arterial pressure regulation. May inhibit basal, but not ghrelin- or GnRH-stimulated secretion of GH1 or LH, but does not affect the release of other pituitary hormones, including PRL, ACTH, FSH or TSH. Potentiates inhibitory action of somatostatin on ghrelin-stimulated secretion of GH1, but not that on GnRH-stimulated secretion of LH. The protein is Somatostatin (SST) of Canis lupus familiaris (Dog).